Here is a 359-residue protein sequence, read N- to C-terminus: Phospho-N-acetylmuramoyl-pentapeptide-transferase (359 aa).

10 consecutive transmembrane segments (helical) span residues 3–23 (QILIAVAIALTVSILLTPALI), 55–75 (VAIIAGIWAGYLGTHLAGLAF), 80–100 (ISASGLLVLSLATVLGIVGFL), 117–137 (TAKTIGQVAAAVLFGVLALGF), 156–176 (IATVTLAPGLFVLFCVVVVSA), 187–207 (LDGLAAGSMAMVTAAYVLITF), 231–251 (LAIVAAATAGACIGFLWWNAA), 255–275 (IFMGDTGSLALGGIIAGISVT), 280–300 (ILAVVLGSLFVAEVSSVVLQI), and 334–354 (FWLLTAIACGLGVALFYGEWL).

This sequence belongs to the glycosyltransferase 4 family. MraY subfamily. Mg(2+) is required as a cofactor.

The protein localises to the cell membrane. It catalyses the reaction UDP-N-acetyl-alpha-D-muramoyl-L-alanyl-gamma-D-glutamyl-meso-2,6-diaminopimeloyl-D-alanyl-D-alanine + di-trans,octa-cis-undecaprenyl phosphate = di-trans,octa-cis-undecaprenyl diphospho-N-acetyl-alpha-D-muramoyl-L-alanyl-D-glutamyl-meso-2,6-diaminopimeloyl-D-alanyl-D-alanine + UMP. The protein operates within cell wall biogenesis; peptidoglycan biosynthesis. Functionally, catalyzes the initial step of the lipid cycle reactions in the biosynthesis of the cell wall peptidoglycan: transfers peptidoglycan precursor phospho-MurNAc-pentapeptide from UDP-MurNAc-pentapeptide onto the lipid carrier undecaprenyl phosphate, yielding undecaprenyl-pyrophosphoryl-MurNAc-pentapeptide, known as lipid I. The chain is Phospho-N-acetylmuramoyl-pentapeptide-transferase from Mycobacterium avium (strain 104).